A 333-amino-acid polypeptide reads, in one-letter code: Syntaxin-4 (333 aa).

At 1-312 the chain is on the cytoplasmic side; the sequence is MGKDRLPELL…QHQKKARKKK (312 aa). Low complexity predominate over residues 50-66; it reads YSVVSQNSHSCSNNNSS. Residues 50–81 are disordered; sequence YSVVSQNSHSCSNNNSSTEPKDRSSSKMTQYG. Residues 91-116 are a coiled coil; the sequence is YTEIRQQLAQIAANLETMNRMAQTVN. The region spanning 239–301 is the t-SNARE coiled-coil homology domain; it reads LREMMDRFNE…DKGADELDQA (63 aa). A helical; Anchor for type IV membrane protein membrane pass occupies residues 313–333; it reads IMLIVILAAVLLVLLLVGIYL.

The protein belongs to the syntaxin family.

It is found in the membrane. Functionally, potentially involved in docking of synaptic vesicles at presynaptic active zones. This is Syntaxin-4 from Drosophila melanogaster (Fruit fly).